The primary structure comprises 531 residues: Zinc finger protein 692 (531 aa).

A compositionally biased stretch (basic and acidic residues) spans 155–178 (EAQGLECEQRERTQETRLSRRVDS). Disordered regions lie at residues 155–249 (EAQG…PATL) and 287–307 (MTESLESPGSQAQSAPNPTWD). Over residues 186–206 (LGEDQDVEEEEEEEEEEEELL) the composition is skewed to acidic residues. A Phosphoserine modification is found at Ser-231. The segment covering 290 to 303 (SLESPGSQAQSAPN) has biased composition (polar residues). 5 consecutive C2H2-type zinc fingers follow at residues 327 to 352 (MPCDFPGCGRIFSNRQYLNHHKKYQH), 358 to 382 (FCCPEPACGKSFNFKKHLKEHVKLH), 388 to 410 (YICEFCARSFRTSSNLVIHRRIH), 416 to 438 (LQCEICGFTCRQKASLNWHRRKH), and 447 to 470 (FPCEFCGKRFEKPDSVVAHCSKSH). Ser-469 is modified (phosphoserine). Positions 474–531 (LPAQEPPGSLVSSPSISAPESLQSPEGASISTTSDSNPASSTSISSPGVPDPRNREKS) are disordered. Residues 483 to 499 (LVSSPSISAPESLQSPE) are compositionally biased toward polar residues. Low complexity predominate over residues 502 to 520 (SISTTSDSNPASSTSISSP).

It belongs to the krueppel C2H2-type zinc-finger protein family. In terms of processing, phosphorylation at Ser-469 results in loss of DNA-binding activity.

It localises to the nucleus. May act as an transcriptional repressor for PCK1 gene expression, in turn may participate in the hepatic gluconeogenesis regulation through the activated AMPK signaling pathway. This chain is Zinc finger protein 692, found in Mus musculus (Mouse).